Reading from the N-terminus, the 125-residue chain is Small ribosomal subunit protein uS13 (125 aa).

Residues 90–125 (TRHRRGLPVRGQRTHTNARTKKGPRRAIAGKKKVTK) form a disordered region.

This sequence belongs to the universal ribosomal protein uS13 family. In terms of assembly, part of the 30S ribosomal subunit. Forms a loose heterodimer with protein S19. Forms two bridges to the 50S subunit in the 70S ribosome.

Its function is as follows. Located at the top of the head of the 30S subunit, it contacts several helices of the 16S rRNA. In the 70S ribosome it contacts the 23S rRNA (bridge B1a) and protein L5 of the 50S subunit (bridge B1b), connecting the 2 subunits; these bridges are implicated in subunit movement. Contacts the tRNAs in the A and P-sites. This chain is Small ribosomal subunit protein uS13, found in Gemmatimonas aurantiaca (strain DSM 14586 / JCM 11422 / NBRC 100505 / T-27).